Reading from the N-terminus, the 2849-residue chain is Polycystin-1-like protein 1 (2849 aa).

At 1–1748 (MAEEAAQNIS…SDISKLQSHP (1748 aa)) the chain is on the extracellular side. N-linked (GlcNAc...) asparagine glycosylation is found at Asn-8, Asn-295, Asn-338, Asn-376, Asn-447, Asn-482, Asn-514, Asn-605, Asn-657, Asn-751, Asn-875, Asn-926, and Asn-937. PKD domains are found at residues 508–590 (SVSV…VQKK) and 592–673 (VANR…VCEP). The 898-residue stretch at 674 to 1571 (CQPPLVKNMG…GEEDGLDNRR (898 aa)) folds into the REJ domain. A compositionally biased stretch (low complexity) spans 970-987 (NLLPTEPGTADPDATTTP). Disordered regions lie at residues 970 to 1068 (NLLP…PHLS) and 1081 to 1118 (IPSG…DPSL). Positions 1053–1068 (RSERSQPTHSPDPHLS) are enriched in basic and acidic residues. Residues Asn-1233, Asn-1301, Asn-1306, Asn-1572, Asn-1681, and Asn-1716 are each glycosylated (N-linked (GlcNAc...) asparagine). The GAIN-B domain maps to 1587 to 1735 (QFTELSENPQ…ALLRRKLKAS (149 aa)). Cysteines 1691 and 1717 form a disulfide. The tract at residues 1691 to 1735 (CLFWDKREWKSERFSPQPGTSPEKVNCSYHRLAAFALLRRKLKAS) is GPS. Residues 1749–1769 (ENLLPSIFIMGSVILYGFLVA) traverse the membrane as a helical segment. The Cytoplasmic portion of the chain corresponds to 1770–1956 (KSRQVDHHEK…SSSRYLHTPR (187 aa)). The PLAT domain occupies 1796–1913 (QLYAVVIDTG…HDGRVERELT (118 aa)). The helical transmembrane segment at 1957–1977 (LTVSFSLLCVYACLTALVAAG) threads the bilayer. At 1978 to 1992 (GQEQPHLDVSPTLGS) the chain is on the extracellular side. A helical membrane pass occupies residues 1993–2013 (FRVGLLCTLLASPGAQLLSLL). The Cytoplasmic portion of the chain corresponds to 2014-2135 (FRLSKEAPGS…SRALQPWWSS (122 aa)). The segment at 2023–2089 (SARVEPHSPL…GTACPAPKLQ (67 aa)) is disordered. Residues 2136–2156 (AVWAICGTASLACSLGTGFLA) form a helical membrane-spanning segment. The Extracellular segment spans residues 2157-2174 (YRFGQEQCVQWLHLLSLS). A helical membrane pass occupies residues 2175–2195 (VVCCIFITQPLMVCLMALGFA). Over 2196-2281 (WKRRADNHFF…QRMRRESRTR (86 aa)) the chain is Cytoplasmic. A helical transmembrane segment spans residues 2282-2302 (AALRDISMDILMLLLLLCVIY). At 2303–2522 (GRFSQDEYSL…FRSDSALQYH (220 aa)) the chain is on the extracellular side. A glycan (N-linked (GlcNAc...) asparagine) is linked at Asn-2426. The chain crosses the membrane as a helical span at residues 2523–2543 (LMLPQLVFLALSLIHLCVQLY). The Cytoplasmic segment spans residues 2544–2562 (RMMDKGVLSYWRKPRNWLE). The chain crosses the membrane as a helical span at residues 2563-2583 (LSVVGVSLTYYAVSGHLVTLA). Topologically, residues 2584 to 2616 (GDVTNQFHRGLCRAFMDLTLMASWNQRARWLRG) are extracellular. A helical membrane pass occupies residues 2617 to 2637 (ILLFLFTLKCVYLPGIQNTMA). Residues 2638 to 2646 (SCSSMMRHS) are Cytoplasmic-facing. Residues 2647-2667 (LPSIFVAGLVGALMLAALSHL) traverse the membrane as a helical segment. Residues 2668–2711 (HRFLLSMWVLPPGTFTDAFPGLLFHFPRRSQKDCLLGLSKSDQR) are Extracellular-facing. A helical membrane pass occupies residues 2712–2732 (AMACYFGILLIVSATLCFGML). At 2733–2849 (RGFLMTLPQK…AAEPADIKDF (117 aa)) the chain is on the cytoplasmic side.

It belongs to the polycystin family. In terms of assembly, heterodimer. Interacts with PKD2 to form a calcium channel. Interacts with PKD2L1; to form ciliary calcium channel. May interact with GNA12, GNAS, GNAI1 and GNAI2. In terms of tissue distribution, detected in testis and in fetal and adult heart.

It localises to the cell projection. Its subcellular location is the cilium membrane. Component of a calcium-permeant ion channel formed by PKD1L2 and PKD1L1 in primary cilia, where it controls cilium calcium concentration, without affecting cytoplasmic calcium concentration, and regulates sonic hedgehog/SHH signaling and GLI2 transcription. The PKD1L1:PKD2L1 channel complex is mechanosensitive only at high pressures and is highly temperature sensitive. Also involved in left/right axis specification downstream of nodal flow by forming a complex with PKD2 in cilia to facilitate flow detection in left/right patterning. May function as a G-protein-coupled receptor. The protein is Polycystin-1-like protein 1 of Homo sapiens (Human).